The primary structure comprises 513 residues: Ribonuclease Y (513 aa).

A helical transmembrane segment spans residues 6–26 (YIIIAVVIIIICVILGLYIVD). The 86-residue stretch at 203–288 (TVHVVNLPND…EMVEKAKKEV (86 aa)) folds into the KH domain. An HD domain is found at 329 to 422 (VLKHSIEVSH…VQAADAISAA (94 aa)).

This sequence belongs to the RNase Y family.

It localises to the cell membrane. Its function is as follows. Endoribonuclease that initiates mRNA decay. This chain is Ribonuclease Y, found in Clostridium botulinum (strain ATCC 19397 / Type A).